Consider the following 37-residue polypeptide: MKVRASVKKVCRHCKVVRRKGVVRVICKDARHKQRQG.

It belongs to the bacterial ribosomal protein bL36 family.

The sequence is that of Large ribosomal subunit protein bL36 from Nitrosococcus oceani (strain ATCC 19707 / BCRC 17464 / JCM 30415 / NCIMB 11848 / C-107).